A 695-amino-acid polypeptide reads, in one-letter code: Lupanine 17-hydroxylase [cytochrome c] (695 aa).

A signal peptide spans 1 to 26; sequence MSANKNIWIIRLGVAFVCVAIGAAQA. Residues 598-677 form the Cytochrome c domain; the sequence is AMAESGRHIF…ALQAFILQKA (80 aa). C612, C615, and H616 together coordinate heme c.

It belongs to the bacterial PQQ dehydrogenase family. Monomer. Pyrroloquinoline quinone is required as a cofactor. Heme c serves as cofactor.

Its subcellular location is the periplasm. The catalysed reaction is lupanine + 2 Fe(III)-[cytochrome c] + H2O = 17-hydroxylupanine + 2 Fe(II)-[cytochrome c] + 2 H(+). Catalyzes the first reaction in the catabolism of the alkaloid lupanine. It dehydrogenates lupanine, which can then be hydrated to produce 17-hydroxylupanine. The protein is Lupanine 17-hydroxylase [cytochrome c] (luh) of Pseudomonas sp.